A 302-amino-acid chain; its full sequence is uncharacterized protein (302 aa).

Residues 13–89 form the S4 RNA-binding domain; sequence QTLFKFLKKT…VNLDIVYEDN (77 aa). Aspartate 141 is an active-site residue.

The protein belongs to the pseudouridine synthase RluA family.

It catalyses the reaction a uridine in RNA = a pseudouridine in RNA. This is an uncharacterized protein from Mycoplasma capricolum subsp. capricolum (strain California kid / ATCC 27343 / NCTC 10154).